Here is a 22-residue protein sequence, read N- to C-terminus: Major outer membrane protein (22 aa).

The protein belongs to the Gram-negative porin family. Disulfide bond interactions within and between MOMP molecules and other components form high molecular-weight oligomers.

Its subcellular location is the cell outer membrane. Structural rigidity of the outer membrane of elementary bodies and porin forming, permitting diffusion of solutes through the intracellular reticulate body membrane. The protein is Major outer membrane protein (ompH) of Avibacterium gallinarum (Pasteurella gallinarum).